The primary structure comprises 912 residues: WD repeat-containing protein 44 (912 aa).

The segment covering 1-14 has biased composition (acidic residues); that stretch reads MASESDTEEFFDAP. The segment at 1-25 is disordered; it reads MASESDTEEFFDAPEDVHLEGGDPI. The residue at position 2 (Ala2) is an N-acetylalanine. The binding activity stretch occupies residues 2–170; the sequence is ASESDTEEFF…SSTAQLNVPE (169 aa). Position 3 is a phosphoserine (Ser3). The FFAT-like motif signature appears at 9–15; that stretch reads EFFDAPE. Phosphoserine is present on residues Ser50, Ser66, Ser71, Ser81, Ser96, and Ser126. 2 disordered regions span residues 79–104 and 118–152; these read DDSLDSKGKGQSDQATASPVTAGTEL and QEDSQKAESQDVSEETELESKQCFPSDDTCEKPVD. Residues 89-104 show a composition bias toward polar residues; it reads QSDQATASPVTAGTEL. Position 158 is a phosphothreonine (Thr158). 5 disordered regions span residues 183-202, 207-279, 318-349, 396-422, and 457-479; these read VKESDVLESASSHSLSTKDF, EVAP…PKEN, QENGKAPDGQTIAGEVMGPQRPRSNSGRELTD, SNDAAQSDDEEKLQSQQTDTDGGRLKQ, and RDEVFHTDQDDPSSSDDEGMPYT. Residues 210 to 256 form an important for interaction with ARHGAP26 AND ARHGAP10 region; it reads PAKPPRQLTPEPDIVASTKKPVPARPPPPANFPPPRPPPPSRPAPPP. At Thr218 the chain carries Phosphothreonine. Pro residues predominate over residues 232-255; sequence PARPPPPANFPPPRPPPPSRPAPP. A Phosphoserine modification is found at Ser261. Over residues 261-277 the composition is skewed to basic and acidic residues; it reads SELEFEALKTPDLDVPK. Thr270 bears the Phosphothreonine mark. Positions 333–346 are important for interaction with RAB11A; it reads VMGPQRPRSNSGRE. The interval 334-504 is interaction with RAB11; sequence MGPQRPRSNS…DFDQIKVVQD (171 aa). Phosphoserine occurs at positions 341 and 343. A Phosphothreonine modification is found at Thr348. A phosphoserine mark is found at Ser402, Ser469, Ser470, and Ser471. The span at 466–475 shows a compositional bias: acidic residues; that stretch reads DDPSSSDDEG. Residue Tyr478 is modified to Phosphotyrosine. Residues 508-547 form a WD 1 repeat; it reads EHMGAVWTMKFSHCGRLLASAGQDNVVRIWALKNAFDYFN. The segment at 556-592 is disordered; the sequence is EGRVSPSPSQESLNSSKSDTDTGVCSGTDEDPDDKNA. Phosphoserine occurs at positions 560 and 564. Residues 560-572 are compositionally biased toward low complexity; the sequence is SPSPSQESLNSSK. 6 WD repeats span residues 604–642, 644–684, 689–728, 739–778, 783–822, and 871–912; these read GHTADLLDLSWSKNYFLLSSSMDKTVRLWHISRRECLCC, QHID…VALW, GQTKLITAANFCQNGKYAVIGTYDGRCIFYDTEHLKYHTQ, KVGRKITGIEPLPGENKILVTSNDSRIRLYDLRDLSLSMK, VNSSSQIKASFSHDFNYLVSGSEDKYVYIWSTYHDLSKFT, and EDAE…KNLS.

Interacts with the GTP-bound form of RAB11A when membrane-associated. Interacts with GRAF1/ARHGAP26 or GRAF2/ARHGAP10; the interaction connects the endoplasmic reticulum (ER) with the endosomal tubule. Interacts (via FFAT-like motif) with VAPA (via MSP domain) or VAPB (via MSP domain); the interaction connects the ER with the endosomal tubule. Does not bind to other Rab and Rho small G proteins. In terms of processing, phosphorylated by ATK1; the phosphorylation stabilizes its interaction with RAB11A and RAB11B. Highly expressed in brain.

The protein localises to the cytoplasm. Its subcellular location is the cytosol. It is found in the perinuclear region. It localises to the endosome membrane. The protein resides in the golgi apparatus. The protein localises to the trans-Golgi network. Its function is as follows. Downstream effector for Rab11 which regulates Rab11 intracellular membrane trafficking functions such as endocytic recycling, intracellular ciliogenesis and protein export. ATK1-mediated phosphorylation of WDR44 induces binding to Rab11 which activates endocytic recycling of transferrin receptor back to the plasma membrane. When bound to Rab11, prevents the formation of the ciliogenic Rab11-Rabin8/RAB3IP-RAB11FIP3 complex, therefore inhibiting preciliary trafficking and ciliogenesis. Participates in neo-synthesized protein export by connecting the endoplasmic reticulum (ER) with the endosomal tubule via direct interactions with the integral ER proteins VAPA or VAPB and the endosomal protein GRAFs (GRAF1/ARHGAP26 or GRAF2/ARHGAP10), which facilitates the transfer of proteins such as E-cadherin, MPP14 and CFTR into a Rab8-Rab10-Rab11-dependent export route. This chain is WD repeat-containing protein 44 (WDR44), found in Bos taurus (Bovine).